The sequence spans 337 residues: Nucleoid-associated protein PBPRA2585 (337 aa).

Belongs to the YejK family.

It is found in the cytoplasm. The protein resides in the nucleoid. This chain is Nucleoid-associated protein PBPRA2585, found in Photobacterium profundum (strain SS9).